We begin with the raw amino-acid sequence, 497 residues long: Guanosine-5'-triphosphate,3'-diphosphate pyrophosphatase (497 aa).

This sequence belongs to the GppA/Ppx family. GppA subfamily.

It catalyses the reaction guanosine 3'-diphosphate 5'-triphosphate + H2O = guanosine 3',5'-bis(diphosphate) + phosphate + H(+). The protein operates within purine metabolism; ppGpp biosynthesis; ppGpp from GTP: step 2/2. Functionally, catalyzes the conversion of pppGpp to ppGpp. Guanosine pentaphosphate (pppGpp) is a cytoplasmic signaling molecule which together with ppGpp controls the 'stringent response', an adaptive process that allows bacteria to respond to amino acid starvation, resulting in the coordinated regulation of numerous cellular activities. In Aliivibrio fischeri (strain ATCC 700601 / ES114) (Vibrio fischeri), this protein is Guanosine-5'-triphosphate,3'-diphosphate pyrophosphatase.